Here is a 397-residue protein sequence, read N- to C-terminus: Small ribosomal subunit protein mS29 (397 aa).

A mitochondrion-targeting transit peptide spans 1 to 17; the sequence is MLKGMTRLVSRVHKLDP. N6-acetyllysine occurs at positions 174 and 206.

This sequence belongs to the mitochondrion-specific ribosomal protein mS29 family. Component of the mitochondrial ribosome small subunit (28S) which comprises a 12S rRNA and about 30 distinct proteins. Interacts with DELE1. Interacts with NOA1.

It localises to the mitochondrion. It carries out the reaction GTP + H2O = GDP + phosphate + H(+). Functionally, as a component of the mitochondrial small ribosomal subunit, it plays a role in the translation of mitochondrial mRNAs. Involved in mediating interferon-gamma-induced cell death. Displays GTPase activity in vitro. The chain is Small ribosomal subunit protein mS29 from Bos taurus (Bovine).